Reading from the N-terminus, the 243-residue chain is Retrotransposon Gag-like protein 6 (243 aa).

Over residues 1–12 (MVQPRTSKTESP) the composition is skewed to polar residues. Residues 1-22 (MVQPRTSKTESPASAPGASAQM) form a disordered region. Positions 29-69 (LTSLRLTNSALRREASTLRAEKANLTNMLESVMAELTLLRT) form a coiled coil. Disordered stretches follow at residues 84 to 105 (SAITSNGTRPMTTPPTSLPEPF) and 218 to 243 (TGSCPVHPASNGTNPAPALPSRGRNL). Polar residues predominate over residues 85–94 (AITSNGTRPM).

Belongs to the LDOC1 family. Widely expressed.

The polypeptide is Retrotransposon Gag-like protein 6 (Mus musculus (Mouse)).